Consider the following 404-residue polypeptide: Phosphoglycerate kinase (404 aa).

Residues 21–23 (DFN), arginine 38, 61–64 (HLGR), arginine 126, and arginine 159 contribute to the substrate site. ATP is bound by residues lysine 210, glutamate 333, and 360–363 (GGDS).

Belongs to the phosphoglycerate kinase family. As to quaternary structure, monomer.

The protein resides in the cytoplasm. It catalyses the reaction (2R)-3-phosphoglycerate + ATP = (2R)-3-phospho-glyceroyl phosphate + ADP. It functions in the pathway carbohydrate degradation; glycolysis; pyruvate from D-glyceraldehyde 3-phosphate: step 2/5. The chain is Phosphoglycerate kinase from Acidobacterium capsulatum (strain ATCC 51196 / DSM 11244 / BCRC 80197 / JCM 7670 / NBRC 15755 / NCIMB 13165 / 161).